Reading from the N-terminus, the 276-residue chain is Glutamate 5-kinase (276 aa).

Position 14 (lysine 14) interacts with ATP. Substrate-binding residues include serine 54, aspartate 141, and asparagine 157. ATP contacts are provided by residues 177–178 (SD) and 219–225 (TGGMLTK).

Belongs to the glutamate 5-kinase family.

The protein resides in the cytoplasm. The catalysed reaction is L-glutamate + ATP = L-glutamyl 5-phosphate + ADP. It participates in amino-acid biosynthesis; L-proline biosynthesis; L-glutamate 5-semialdehyde from L-glutamate: step 1/2. Functionally, catalyzes the transfer of a phosphate group to glutamate to form L-glutamate 5-phosphate. This chain is Glutamate 5-kinase, found in Listeria monocytogenes serotype 4a (strain HCC23).